The primary structure comprises 498 residues: Glycerol kinase (498 aa).

Threonine 12 contributes to the ADP binding site. Residues threonine 12, threonine 13, and serine 14 each coordinate ATP. Threonine 12 contacts sn-glycerol 3-phosphate. Arginine 16 is an ADP binding site. The sn-glycerol 3-phosphate site is built by arginine 82, glutamate 83, tyrosine 134, and aspartate 244. Arginine 82, glutamate 83, tyrosine 134, aspartate 244, and glutamine 245 together coordinate glycerol. The ADP site is built by threonine 266 and glycine 310. Positions 266, 310, 314, and 411 each coordinate ATP. ADP is bound by residues glycine 411 and asparagine 415.

This sequence belongs to the FGGY kinase family.

The enzyme catalyses glycerol + ATP = sn-glycerol 3-phosphate + ADP + H(+). The protein operates within polyol metabolism; glycerol degradation via glycerol kinase pathway; sn-glycerol 3-phosphate from glycerol: step 1/1. Inhibited by fructose 1,6-bisphosphate (FBP). In terms of biological role, key enzyme in the regulation of glycerol uptake and metabolism. Catalyzes the phosphorylation of glycerol to yield sn-glycerol 3-phosphate. The protein is Glycerol kinase of Roseiflexus sp. (strain RS-1).